A 533-amino-acid polypeptide reads, in one-letter code: MQRRHFLKNAAAALAALGLPALPPWALAAKAVGLRRLGQPQPFDYAWLKGQARALAKAPYKSHKQVLPGPLESLNWDQYQSIRYRQDHALWADGNGKFQAKFFHLGLYFHTPVHIYDIVDGKAQQLAYDPAAFDYGRSGLGGKQLPKDLGFAGFRLNTRKDTDRDFSAFLGASYFRAVGKEGQYGQSARGLAIDTGTGGPEEFPDFIAYYLEQPADDSDTVVVYGLLDSPSVSGAYRFAITNGEVLVMDIDSALYPRKAIERLGIGPCTSMYQTGENDRRMDWDWRPEIHDTDGLAMWTGGGEWIWRPLCNPPHLRFNMFVDENPRGFGLLQRDRNFDHYQDDGVFYEKRPCLWVEPKSGWGKGSVQLVEIPTVDETFDNIVAFWNPQAKPQPGQELLMGYRLYWGAHPPASSPLAHCMATRTGLGGIVGQKRSHFSWRFAVDFAGGELAALAKDPKAKVEAVLQVSRGTTEIVSARPLHELKGYRAMFDLVPPDEGTQQIDIRLFLRANGKPLTETWLYQWTPPPASERKIY.

Positions Met-1–Ala-28 form a signal peptide, tat-type signal.

It belongs to the OpgD/OpgG family. Predicted to be exported by the Tat system. The position of the signal peptide cleavage has not been experimentally proven.

It is found in the periplasm. It functions in the pathway glycan metabolism; osmoregulated periplasmic glucan (OPG) biosynthesis. Functionally, probably involved in the control of the structural glucose backbone of osmoregulated periplasmic glucans (OPGs). This chain is Glucans biosynthesis protein D, found in Xanthomonas campestris pv. campestris (strain 8004).